The following is a 244-amino-acid chain: Uridylate kinase (244 aa).

Residue 17 to 20 (KLSG) participates in ATP binding. Glycine 59 is a UMP binding site. Residues glycine 60 and arginine 64 each contribute to the ATP site. Residues aspartate 79 and 140–147 (TGNPFFTT) each bind UMP. Positions 167, 173, and 176 each coordinate ATP.

This sequence belongs to the UMP kinase family. As to quaternary structure, homohexamer.

It localises to the cytoplasm. The enzyme catalyses UMP + ATP = UDP + ADP. It functions in the pathway pyrimidine metabolism; CTP biosynthesis via de novo pathway; UDP from UMP (UMPK route): step 1/1. Its activity is regulated as follows. Inhibited by UTP. In terms of biological role, catalyzes the reversible phosphorylation of UMP to UDP. In Hahella chejuensis (strain KCTC 2396), this protein is Uridylate kinase.